The primary structure comprises 259 residues: UPF0246 protein PFLU_0992 (259 aa).

This sequence belongs to the UPF0246 family.

This is UPF0246 protein PFLU_0992 from Pseudomonas fluorescens (strain SBW25).